We begin with the raw amino-acid sequence, 362 residues long: Ribosomal RNA large subunit methyltransferase M (362 aa).

S-adenosyl-L-methionine-binding positions include Ser-187, 220–223 (CPGG), Asp-239, Asp-259, and Asp-276. The active-site Proton acceptor is Lys-305.

The protein belongs to the class I-like SAM-binding methyltransferase superfamily. RNA methyltransferase RlmE family. RlmM subfamily. As to quaternary structure, monomer.

The protein localises to the cytoplasm. The enzyme catalyses cytidine(2498) in 23S rRNA + S-adenosyl-L-methionine = 2'-O-methylcytidine(2498) in 23S rRNA + S-adenosyl-L-homocysteine + H(+). In terms of biological role, catalyzes the 2'-O-methylation at nucleotide C2498 in 23S rRNA. This Shewanella frigidimarina (strain NCIMB 400) protein is Ribosomal RNA large subunit methyltransferase M.